Consider the following 200-residue polypeptide: Nascent polypeptide-associated complex subunit alpha (200 aa).

Over residues Met-1–Val-19 the composition is skewed to basic and acidic residues. Disordered regions lie at residues Met-1–Glu-52 and Gln-120–Asp-165. Positions Glu-20–Ala-34 are enriched in acidic residues. One can recognise an NAC-A/B domain in the interval Ser-49–Ala-114. A compositionally biased stretch (basic and acidic residues) spans Ala-127–Ala-143. The segment covering Lys-144–Gly-160 has biased composition (acidic residues). A UBA domain is found at Ile-161–Val-200.

The protein belongs to the NAC-alpha family. As to quaternary structure, part of the nascent polypeptide-associated complex (NAC), consisting of EGD2 and EGD1. NAC associates with ribosomes via EGD1.

Its subcellular location is the cytoplasm. It is found in the nucleus. Functionally, component of the nascent polypeptide-associated complex (NAC), a dynamic component of the ribosomal exit tunnel, protecting the emerging polypeptides from interaction with other cytoplasmic proteins to ensure appropriate nascent protein targeting. The NAC complex also promotes mitochondrial protein import by enhancing productive ribosome interactions with the outer mitochondrial membrane and blocks the inappropriate interaction of ribosomes translating non-secretory nascent polypeptides with translocation sites in the membrane of the endoplasmic reticulum. EGD2 may also be involved in transcription regulation. This chain is Nascent polypeptide-associated complex subunit alpha (EGD2), found in Chaetomium globosum (strain ATCC 6205 / CBS 148.51 / DSM 1962 / NBRC 6347 / NRRL 1970) (Soil fungus).